The chain runs to 288 residues: Acetyl-coenzyme A carboxylase carboxyl transferase subunit beta (288 aa).

Positions 34 to 288 (LFAKCPACKH…HLVAFHGGVS (255 aa)) constitute a CoA carboxyltransferase N-terminal domain. Zn(2+) is bound by residues cysteine 38, cysteine 41, cysteine 56, and cysteine 59. The C4-type zinc finger occupies 38 to 59 (CPACKHMIYQKDLGPAKICPTC).

The protein belongs to the AccD/PCCB family. In terms of assembly, acetyl-CoA carboxylase is a heterohexamer composed of biotin carboxyl carrier protein (AccB), biotin carboxylase (AccC) and two subunits each of ACCase subunit alpha (AccA) and ACCase subunit beta (AccD). It depends on Zn(2+) as a cofactor.

It is found in the cytoplasm. It carries out the reaction N(6)-carboxybiotinyl-L-lysyl-[protein] + acetyl-CoA = N(6)-biotinyl-L-lysyl-[protein] + malonyl-CoA. It functions in the pathway lipid metabolism; malonyl-CoA biosynthesis; malonyl-CoA from acetyl-CoA: step 1/1. Its function is as follows. Component of the acetyl coenzyme A carboxylase (ACC) complex. Biotin carboxylase (BC) catalyzes the carboxylation of biotin on its carrier protein (BCCP) and then the CO(2) group is transferred by the transcarboxylase to acetyl-CoA to form malonyl-CoA. The sequence is that of Acetyl-coenzyme A carboxylase carboxyl transferase subunit beta from Streptococcus equi subsp. zooepidemicus (strain H70).